The chain runs to 501 residues: Glucose-6-phosphate exchanger SLC37A2 (501 aa).

The chain crosses the membrane as a helical span at residues 19–39 (SWFRGLILLLTFLIYACYHMS). Asn-53, Asn-62, and Asn-68 each carry an N-linked (GlcNAc...) asparagine glycan. The next 5 membrane-spanning stretches (helical) occupy residues 88-108 (GGVD…SGVF), 118-138 (LSAG…GYFW), 145-165 (YFVV…PSVV), 189-209 (SVGN…QWGL), and 210-230 (SFIV…LFLI). The interval 240-262 (PPQHHGEPAENQDNPEDPGNSPC) is disordered. Transmembrane regions (helical) follow at residues 302-322 (LCLL…PLYI), 334-354 (GDLS…AGLV), 362-382 (ATTC…YNYI), 391-411 (IVML…ITTA), 434-454 (AIID…AGLI), and 462-482 (VFYM…RLVY).

The protein belongs to the major facilitator superfamily. Organophosphate:Pi antiporter (OPA) (TC 2.A.1.4) family. Detected in intestine and pancreas. Lower expression is also detected in liver and kidney.

It localises to the endoplasmic reticulum membrane. The catalysed reaction is D-glucose 6-phosphate(in) + phosphate(out) = D-glucose 6-phosphate(out) + phosphate(in). Inhibited by vanadate but not by chlorogenic acid. In terms of biological role, inorganic phosphate and glucose-6-phosphate antiporter. May transport cytoplasmic glucose-6-phosphate into the lumen of the endoplasmic reticulum and translocate inorganic phosphate into the opposite direction. Independent of a lumenal glucose-6-phosphatase. May not play a role in homeostatic regulation of blood glucose levels. This Homo sapiens (Human) protein is Glucose-6-phosphate exchanger SLC37A2.